Consider the following 370-residue polypeptide: Platelet-derived growth factor D (370 aa).

The signal sequence occupies residues 1–18 (MHRLIFVCTLVCANFCSC). In terms of domain architecture, CUB spans 52 to 170 (RDETIQVRGN…PGFKIYYSLL (119 aa)). C109 and C131 are joined by a disulfide. Residue N276 is glycosylated (N-linked (GlcNAc...) asparagine). 2 cysteine pairs are disulfide-bonded: C302/C360 and C306/C362.

Belongs to the PDGF/VEGF growth factor family. Homodimer; disulfide-linked. Interacts with PDGFRB homodimers, and with heterodimers formed by PDGFRA and PDGFRB. Activated by proteolytic cleavage. Proteolytic removal of the N-terminal CUB domain releasing the core domain is necessary for unmasking the receptor-binding epitopes of the core domain. Cleavage after Arg-247 or Arg-249 by urokinase plasminogen activator gives rise to the active form.

The protein resides in the secreted. Its function is as follows. Growth factor that plays an essential role in the regulation of embryonic development, cell proliferation, cell migration, survival and chemotaxis. Potent mitogen for cells of mesenchymal origin. Plays an important role in wound healing. Induces macrophage recruitment, increased interstitial pressure, and blood vessel maturation during angiogenesis. Can initiate events that lead to a mesangial proliferative glomerulonephritis, including influx of monocytes and macrophages and production of extracellular matrix. This chain is Platelet-derived growth factor D (PDGFD), found in Pongo abelii (Sumatran orangutan).